The following is a 352-amino-acid chain: C-C chemokine receptor type 5 (352 aa).

Over methionine 1–alanine 30 the chain is Extracellular. At tyrosine 3 the chain carries Sulfotyrosine. Serine 6 and serine 7 each carry an O-linked (GalNAc...) serine glycan. A sulfotyrosine mark is found at tyrosine 10, tyrosine 14, and tyrosine 15. 2 disulfides stabilise this stretch: cysteine 20–cysteine 269 and cysteine 101–cysteine 178. The helical transmembrane segment at arginine 31 to cysteine 58 threads the bilayer. Over lysine 59–tyrosine 68 the chain is Cytoplasmic. A helical transmembrane segment spans residues leucine 69–tyrosine 89. Residues alanine 90–glutamine 102 lie on the Extracellular side of the membrane. A helical transmembrane segment spans residues leucine 103–isoleucine 124. Topologically, residues aspartate 125–threonine 141 are cytoplasmic. A helical transmembrane segment spans residues valine 142 to phenylalanine 166. At threonine 167–isoleucine 198 the chain is on the extracellular side. Residues valine 199–leucine 218 traverse the membrane as a helical segment. Topologically, residues lysine 219 to arginine 235 are cytoplasmic. The helical transmembrane segment at leucine 236 to phenylalanine 260 threads the bilayer. The Extracellular portion of the chain corresponds to glutamine 261–glutamine 277. Residues alanine 278–glycine 301 form a helical membrane-spanning segment. Topologically, residues glutamate 302–leucine 352 are cytoplasmic. 3 S-palmitoyl cysteine lipidation sites follow: cysteine 321, cysteine 323, and cysteine 324. Serine 336, serine 337, serine 342, and serine 349 each carry phosphoserine; by BARK1.

The protein belongs to the G-protein coupled receptor 1 family. Interacts with PRAF2. Efficient ligand binding to CCL3/MIP-1alpha and CCL4/MIP-1beta requires sulfation, O-glycosylation and sialic acid modifications. Glycosylation on Ser-6 is required for efficient binding of CCL4. Interacts with GRK2. Interacts with ARRB1 and ARRB2. Interacts with CNIH4. Interacts with S100A4; this interaction stimulates T-lymphocyte chemotaxis. Post-translationally, sulfated on at least 2 of the N-terminal tyrosines. Sulfation is required for efficient binding of the chemokines, CCL3 and CCL4. Palmitoylation in the C-terminal is important for cell surface expression. In terms of processing, phosphorylation on serine residues in the C-terminal is stimulated by binding CC chemokines especially by APO-RANTES. Post-translationally, O-glycosylated, but not N-glycosylated. Ser-6 appears to be the major site even if Ser-7 may be also O-glycosylated. Also sialylated glycans present which contribute to chemokine binding. Thr-16 and Ser-17 may also be glycosylated and, if so, with small moieties such as a T-antigen.

Its subcellular location is the cell membrane. Functionally, receptor for a number of inflammatory CC-chemokines including CCL3/MIP-1-alpha, CCL4/MIP-1-beta and RANTES and subsequently transduces a signal by increasing the intracellular calcium ion level. May play a role in the control of granulocytic lineage proliferation or differentiation. Participates in T-lymphocyte migration to the infection site by acting as a chemotactic receptor. This chain is C-C chemokine receptor type 5 (CCR5), found in Chlorocebus tantalus (Tantalus monkey).